A 404-amino-acid chain; its full sequence is Arginine biosynthesis bifunctional protein ArgJ (404 aa).

Substrate-binding residues include T156, K182, T193, E277, N399, and S404. Residue T193 is the Nucleophile of the active site.

This sequence belongs to the ArgJ family. In terms of assembly, heterotetramer of two alpha and two beta chains.

It localises to the cytoplasm. It carries out the reaction N(2)-acetyl-L-ornithine + L-glutamate = N-acetyl-L-glutamate + L-ornithine. The enzyme catalyses L-glutamate + acetyl-CoA = N-acetyl-L-glutamate + CoA + H(+). It functions in the pathway amino-acid biosynthesis; L-arginine biosynthesis; L-ornithine and N-acetyl-L-glutamate from L-glutamate and N(2)-acetyl-L-ornithine (cyclic): step 1/1. It participates in amino-acid biosynthesis; L-arginine biosynthesis; N(2)-acetyl-L-ornithine from L-glutamate: step 1/4. Catalyzes two activities which are involved in the cyclic version of arginine biosynthesis: the synthesis of N-acetylglutamate from glutamate and acetyl-CoA as the acetyl donor, and of ornithine by transacetylation between N(2)-acetylornithine and glutamate. This is Arginine biosynthesis bifunctional protein ArgJ from Chlorobaculum tepidum (strain ATCC 49652 / DSM 12025 / NBRC 103806 / TLS) (Chlorobium tepidum).